The following is a 607-amino-acid chain: Tyrosine-protein kinase RYK (607 aa).

Residues 1-20 (MRGAARLGRPGRSCLPGARG) are disordered. The signal sequence occupies residues 1-25 (MRGAARLGRPGRSCLPGARGLRAPP). Topologically, residues 26–227 (PPPLLLLLAL…VHAAPTTSTR (202 aa)) are extracellular. A WIF domain is found at 66-194 (LYLSEDEVRR…VLNFKRRKMC (129 aa)). 5 N-linked (GlcNAc...) asparagine glycosylation sites follow: Asn-139, Asn-174, Asn-178, Asn-182, and Asn-209. Cys-159 and Cys-194 form a disulfide bridge. A helical transmembrane segment spans residues 228–248 (VFYISVGVCCAVIFLVAIILA). At 249 to 607 (VLHLHSMKRI…EFHAALGAYV (359 aa)) the chain is on the cytoplasmic side. Residues 266–282 (ASSSSQGLSQPSTQTTQ) show a composition bias toward low complexity. The segment at 266 to 290 (ASSSSQGLSQPSTQTTQYLRADTPN) is disordered. In terms of domain architecture, Protein kinase spans 330 to 603 (ITLKDVLQEG…QCLTEFHAAL (274 aa)). ATP contacts are provided by residues 336–344 (LQEGTFGRI) and Lys-364. Asp-465 (proton acceptor) is an active-site residue. Tyr-495 is modified (phosphotyrosine; by autocatalysis).

It belongs to the protein kinase superfamily. Tyr protein kinase family. In terms of assembly, interacts with DVL1 (via PDZ domain). Proteolytically cleaved, in part by presenilin, in response to WNT3 stimulation. Cleavage occurs during neuronal differentiation. As to expression, observed in all the tissues examined.

Its subcellular location is the membrane. It is found in the nucleus. The protein localises to the cytoplasm. It catalyses the reaction L-tyrosyl-[protein] + ATP = O-phospho-L-tyrosyl-[protein] + ADP + H(+). May be a coreceptor along with FZD8 of Wnt proteins, such as WNT1, WNT3, WNT3A and WNT5A. Involved in neuron differentiation, axon guidance, corpus callosum establishment and neurite outgrowth. In response to WNT3 stimulation, receptor C-terminal cleavage occurs in its transmembrane region and allows the C-terminal intracellular product to translocate from the cytoplasm to the nucleus where it plays a crucial role in neuronal development. This chain is Tyrosine-protein kinase RYK, found in Homo sapiens (Human).